A 102-amino-acid chain; its full sequence is Large ribosomal subunit protein bL21 (102 aa).

Belongs to the bacterial ribosomal protein bL21 family. Part of the 50S ribosomal subunit. Contacts protein L20.

Functionally, this protein binds to 23S rRNA in the presence of protein L20. In Azorhizobium caulinodans (strain ATCC 43989 / DSM 5975 / JCM 20966 / LMG 6465 / NBRC 14845 / NCIMB 13405 / ORS 571), this protein is Large ribosomal subunit protein bL21.